The primary structure comprises 650 residues: MSEKIYDVPAEWAKRAFVDDAKYQEMYASSIRDPNGFWAEQAKRVDWIHAPTKIENVSYAPGNISIKWFEDGVLNAAYNCIDRHLATRADQTAIIWEGDDPADSKHITYRQLHDEVCKMANILRNRNVKKGDRVTIYLPMIPEAAYAMLACARIGAIHSVVFAGFSPDSLAQRIKDCDSKVVITADEGLRGGRKVPLKANVDAALNKVDNVDWVVVVKRTGGKIEMNPTRDLWYHEAAEMVTTECPVEHMNAEDALFILYTSGSTGQPKGVLHTTGGYLVYASMTHQYVFDYHEGDVYWCTADVGWVTGHSYILYGPLANGAVTLMFEGVPNYPDNSRFWNVIDKHKVNIFYTAPTAIRALMQGGDGPVTKTSRESLRLLGSVGEPINPEAWEWYHRVVGDNRCPIVDTWWQTETGGILITPLPGATRLKPGSATRPFFGVVPEIVDADGNTLEGATEGNLCLTRSWPGQMRTVYGDHARFEMTYFSTYKGKYFTGDGCRRDADGYYWITGRVDDVINVSGHRMGTAEVESALVAHPKVSEAAVVGYPHDIKGQGIYAYVTLMAGETPSEELRKELVGWVRKEIGPIASPDQIQFSQGLPKTRSGKIMRRILRKIAEDEPGALGDTSTLADPAVVDDLVQHRQNRKEKQA.

CoA is bound by residues 190–193, T308, and N332; that span reads RGGR. ATP contacts are provided by residues 384-386, 408-413, D497, and R512; these read GEP and DTWWQT. S520 lines the CoA pocket. Residue R523 participates in ATP binding. Mg(2+)-binding residues include V534, H536, and V539. A CoA-binding site is contributed by R581. K606 bears the N6-acetyllysine mark.

It belongs to the ATP-dependent AMP-binding enzyme family. The cofactor is Mg(2+). In terms of processing, acetylated. Deacetylation by the SIR2-homolog deacetylase activates the enzyme.

The enzyme catalyses acetate + ATP + CoA = acetyl-CoA + AMP + diphosphate. In terms of biological role, catalyzes the conversion of acetate into acetyl-CoA (AcCoA), an essential intermediate at the junction of anabolic and catabolic pathways. AcsA undergoes a two-step reaction. In the first half reaction, AcsA combines acetate with ATP to form acetyl-adenylate (AcAMP) intermediate. In the second half reaction, it can then transfer the acetyl group from AcAMP to the sulfhydryl group of CoA, forming the product AcCoA. This Bradyrhizobium sp. (strain ORS 278) protein is Acetyl-coenzyme A synthetase.